The primary structure comprises 326 residues: ATP synthase subunit gamma, mitochondrial (326 aa).

The transit peptide at 1 to 45 (MAMAALRREGRRLAAAPFTSPTPLNALRSSLVSPSEEIGLSGVRS) directs the protein to the mitochondrion.

The protein belongs to the ATPase gamma chain family. F-type ATPases have 2 components, CF(1) - the catalytic core - and CF(0) - the membrane proton channel. CF(1) has five subunits: alpha(3), beta(3), gamma(1), delta(1), epsilon(1). CF(0) has three main subunits: a, b and c.

It localises to the mitochondrion. The protein localises to the mitochondrion inner membrane. Mitochondrial membrane ATP synthase (F(1)F(0) ATP synthase or Complex V) produces ATP from ADP in the presence of a proton gradient across the membrane which is generated by electron transport complexes of the respiratory chain. F-type ATPases consist of two structural domains, F(1) - containing the extramembraneous catalytic core, and F(0) - containing the membrane proton channel, linked together by a central stalk and a peripheral stalk. During catalysis, ATP synthesis in the catalytic domain of F(1) is coupled via a rotary mechanism of the central stalk subunits to proton translocation. Part of the complex F(1) domain and the central stalk which is part of the complex rotary element. The gamma subunit protrudes into the catalytic domain formed of alpha(3)beta(3). Rotation of the central stalk against the surrounding alpha(3)beta(3) subunits leads to hydrolysis of ATP in three separate catalytic sites on the beta subunits. This is ATP synthase subunit gamma, mitochondrial (ATPC) from Ipomoea batatas (Sweet potato).